Reading from the N-terminus, the 463-residue chain is L-seryl-tRNA(Sec) selenium transferase (463 aa).

K295 is subject to N6-(pyridoxal phosphate)lysine.

It belongs to the SelA family. As to quaternary structure, homodecamer; pentamer of dimers. Binds only one seryl-tRNA(Sec) per dimer. Pyridoxal 5'-phosphate is required as a cofactor.

It is found in the cytoplasm. The enzyme catalyses L-seryl-tRNA(Sec) + selenophosphate + H(+) = L-selenocysteinyl-tRNA(Sec) + phosphate. The protein operates within aminoacyl-tRNA biosynthesis; selenocysteinyl-tRNA(Sec) biosynthesis; selenocysteinyl-tRNA(Sec) from L-seryl-tRNA(Sec) (bacterial route): step 1/1. Functionally, converts seryl-tRNA(Sec) to selenocysteinyl-tRNA(Sec) required for selenoprotein biosynthesis. The polypeptide is L-seryl-tRNA(Sec) selenium transferase (Photorhabdus laumondii subsp. laumondii (strain DSM 15139 / CIP 105565 / TT01) (Photorhabdus luminescens subsp. laumondii)).